Reading from the N-terminus, the 167-residue chain is 6,7-dimethyl-8-ribityllumazine synthase (167 aa).

5-amino-6-(D-ribitylamino)uracil-binding positions include Phe24, 58-60 (ALE), and 82-84 (AVV). Position 87-88 (87-88 (ET)) interacts with (2S)-2-hydroxy-3-oxobutyl phosphate. His90 (proton donor) is an active-site residue. Position 115 (Asn115) interacts with 5-amino-6-(D-ribitylamino)uracil. Arg129 contacts (2S)-2-hydroxy-3-oxobutyl phosphate.

It belongs to the DMRL synthase family.

The enzyme catalyses (2S)-2-hydroxy-3-oxobutyl phosphate + 5-amino-6-(D-ribitylamino)uracil = 6,7-dimethyl-8-(1-D-ribityl)lumazine + phosphate + 2 H2O + H(+). Its pathway is cofactor biosynthesis; riboflavin biosynthesis; riboflavin from 2-hydroxy-3-oxobutyl phosphate and 5-amino-6-(D-ribitylamino)uracil: step 1/2. Functionally, catalyzes the formation of 6,7-dimethyl-8-ribityllumazine by condensation of 5-amino-6-(D-ribitylamino)uracil with 3,4-dihydroxy-2-butanone 4-phosphate. This is the penultimate step in the biosynthesis of riboflavin. The protein is 6,7-dimethyl-8-ribityllumazine synthase of Cupriavidus pinatubonensis (strain JMP 134 / LMG 1197) (Cupriavidus necator (strain JMP 134)).